The chain runs to 103 residues: MIKSELVQRIAEHNPHLYQRDVENIVNAILDEIVAALARGDRVELRGFGAFSVKHRPARAGRNPRTGAHVPVDQKSVPFFKTGKEMRERLNRDNPAGAADTDD.

Belongs to the bacterial histone-like protein family. In terms of assembly, heterodimer of an alpha and a beta chain.

Its function is as follows. This protein is one of the two subunits of integration host factor, a specific DNA-binding protein that functions in genetic recombination as well as in transcriptional and translational control. The sequence is that of Integration host factor subunit beta from Bradyrhizobium sp. (strain BTAi1 / ATCC BAA-1182).